A 1561-amino-acid polypeptide reads, in one-letter code: ABC-type transporter phomO' (1561 aa).

Helical transmembrane passes span 34–54, 110–130, 139–159, 172–192, 202–222, 314–334, and 358–378; these read LYFE…LLAA, CTAG…CTTV, SVPA…LAHF, SSSL…APLV, GSAL…LIAV, LGLY…FTLA, and GLIG…GWYW. Positions 326 to 599 constitute an ABC transmembrane type-1 1 domain; it reads LCLAGFTLAQ…LLQIIPSFGA (274 aa). Asparagine 384 is a glycosylation site (N-linked (GlcNAc...) asparagine). A run of 4 helical transmembrane segments spans residues 428 to 448, 452 to 472, 535 to 555, and 577 to 597; these read LAYA…TWML, VGPP…TSTY, LIVG…VLVF, and LIWI…IPSF. Residues 645–871 enclose the ABC transporter 1 domain; the sequence is IHNSSFSYTD…VEDENGDVDN (227 aa). N-linked (GlcNAc...) asparagine glycosylation is present at asparagine 647. Residue 678–685 coordinates ATP; sequence GPAGCGKS. A glycan (N-linked (GlcNAc...) asparagine) is linked at asparagine 721. The disordered stretch occupies residues 853–899; sequence YQFPPSQADVEDENGDVDNGAENTRPRESSHTTEAQSGPPEPKSKPT. The next 4 membrane-spanning stretches (helical) occupy residues 913–933, 969–989, 1037–1054, and 1147–1167; these read SIGF…AFCL, VLPL…IVPL, LFNT…VILI, and LVLN…AVGL. The ABC transmembrane type-1 2 domain occupies 920-1209; the sequence is VLFIGGGIIF…LLTAWTSLET (290 aa). N-linked (GlcNAc...) asparagine glycosylation is present at asparagine 1189. Residues 1229 to 1238 are compositionally biased toward basic and acidic residues; the sequence is DVLVRPDSLD. The tract at residues 1229 to 1298 is disordered; it reads DVLVRPDSLD…DVAADGEKHE (70 aa). Acidic residues predominate over residues 1269 to 1280; it reads YDDDDESDENTD. The ABC transporter 2 domain occupies 1297 to 1545; it reads HEATTITTTS…SDIFAFFGRS (249 aa). ATP is bound at residue 1333-1340; the sequence is GRTGSGKS. The N-linked (GlcNAc...) asparagine glycan is linked to asparagine 1496.

The protein belongs to the ABC transporter superfamily. ABCC family. Conjugate transporter (TC 3.A.1.208) subfamily.

It is found in the membrane. Its function is as follows. ABC-type transporter; part of the gene cluster that mediates the biosynthesis of the phomopsins, a group of hexapeptide mycotoxins which infects lupins and causes lupinosis disease in livestock. This Diaporthe leptostromiformis (Lupinosis disease fungus) protein is ABC-type transporter phomO'.